The following is a 2145-amino-acid chain: Adenylate cyclase (2145 aa).

4 disordered regions span residues 1–115, 127–236, 266–307, and 329–547; these read MPRN…RMSD, DPAG…SGAR, GKEH…PVPK, and VRDI…GPTD. Composition is skewed to low complexity over residues 7-23, 35-68, and 89-107; these read SSRF…SARS, PSAS…APSR, and SPTS…SSNS. 2 stretches are compositionally biased toward polar residues: residues 134-148 and 159-205; these read SRTQ…SLSQ and PASS…TESP. A compositionally biased stretch (low complexity) spans 217-234; that stretch reads SIASITTTASSQGSRASG. Residues 269–281 are compositionally biased toward basic residues; it reads HRSHSYSHARPHR. The segment covering 343–357 has biased composition (polar residues); that stretch reads NDSSQQNNPPKTSGS. The span at 377–403 shows a compositional bias: basic and acidic residues; it reads KSNEDPRSLRPTVSREDSTISVPKDRN. Positions 404 to 441 are enriched in polar residues; the sequence is GSSTMYGTRSRAQSPAPSTTGSYWGHKSGSTDGQTSPG. 2 stretches are compositionally biased toward basic and acidic residues: residues 454–466 and 495–511; these read RLKE…DLKK and ADGK…RPDL. The 91-residue stretch at 637-727 folds into the Ras-associating domain; it reads HNYCIRVFRA…IEDIGREDNS (91 aa). 15 LRR repeats span residues 779–800, 803–824, 826–847, 850–871, 873–894, 896–917, 919–941, 943–964, 965–986, 987–1006, 1007–1028, 1030–1051, 1053–1074, 1076–1097, and 1099–1120; these read EIIS…FISV, NLRD…FGYA, RLTM…ALHN, GLLK…FEAF, VLRT…LAKL, NLVD…VGQM, SLER…FKNL, SLRE…SQLP, KLEI…FERV, RSIK…APVP, TLKA…FHNM, NLER…IGNL, RLEY…IGCL, ELKR…LWWA, and KLDY…ASRA. A disordered region spans residues 1114–1226; sequence PKPASRAPHP…SSRKDSSHTQ (113 aa). 2 stretches are compositionally biased toward low complexity: residues 1160 to 1179 and 1201 to 1217; these read RPSQ…VPGG and SRST…PTAS. LRR repeat units lie at residues 1235–1255, 1259–1280, 1283–1304, 1307–1328, 1330–1352, and 1359–1380; these read SLRY…DQLC, NLRV…SIKS, QLVE…DLEE, MLQT…ISRA, KLTV…PYDW, and NLRY…SVPT. Residues 1432-1709 form the PPM-type phosphatase domain; it reads PYGMADTLGS…NKMTVQMLGV (278 aa). Residues 1718–1760 form a disordered region; the sequence is RSRQHKGQSMPVYASLQDDGGSSTGMRRARKARDGPLDSTLGR. One can recognise a Guanylate cyclase domain in the interval 1773-1910; sequence AIVFTDIKNS…PMVNKASRIS (138 aa). D1778 and D1821 together coordinate Mg(2+).

It belongs to the adenylyl cyclase class-3 family. Mg(2+) is required as a cofactor.

It catalyses the reaction ATP = 3',5'-cyclic AMP + diphosphate. Its function is as follows. Plays essential roles in regulation of cellular metabolism by catalyzing the synthesis of a second messenger, cAMP. This Podospora anserina (Pleurage anserina) protein is Adenylate cyclase.